The following is a 471-amino-acid chain: Putative multidrug resistance protein MdtD (471 aa).

The Periplasmic segment spans residues 1–11 (MTDLPDSTRWQ). Residues 12-32 (LWIVAFGFFMQSLDTTIVNTA) form a helical membrane-spanning segment. Topologically, residues 33–48 (LPSMAQSLGESPLHMH) are cytoplasmic. A helical membrane pass occupies residues 49-69 (MVIVSYVLTVAVMLPASGWLA). Residues 70 to 76 (DKVGVRN) lie on the Periplasmic side of the membrane. The chain crosses the membrane as a helical span at residues 77 to 97 (IFFTAIVLFTLGSLFCALSGT). Residues 98–101 (LNEL) are Cytoplasmic-facing. The helical transmembrane segment at 102 to 124 (LLARALQGVGGAMMVPVGRLTVM) threads the bilayer. The Periplasmic segment spans residues 125 to 137 (KIVPREQYMAAMT). Residues 138 to 158 (FVTLPGQIGPLLGPALGGLLV) form a helical membrane-spanning segment. The Cytoplasmic portion of the chain corresponds to 159-164 (EYASWH). Residues 165–185 (WIFLINIPVGIIGAIATLMLM) form a helical membrane-spanning segment. Over 186–196 (PNYTMQTRRFD) the chain is Periplasmic. A helical membrane pass occupies residues 197 to 217 (LSGFLLLAVGMAVLTLALDGS). At 218–224 (KGTGFSP) the chain is on the cytoplasmic side. A helical membrane pass occupies residues 225 to 245 (LAIAGLVAVGVVALVLYLLHA). The Periplasmic segment spans residues 246–262 (QNNNRALFSLKLFRTRT). The chain crosses the membrane as a helical span at residues 263–283 (FSLGLAGSFAGRIGSGMLPFM). Topologically, residues 284 to 285 (TP) are cytoplasmic. The helical transmembrane segment at 286 to 306 (VFLQIGLGFSPFHAGLMMIPM) threads the bilayer. Residues 307–341 (VLGSMGMKRIVVQVVNRFGYRWVLVATTLGLSLVT) lie on the Periplasmic side of the membrane. Residues 342 to 362 (LLFMTTALLGWYYVLPFVLFL) traverse the membrane as a helical segment. Over 363-395 (QGMVNSTRFSSMNTLTLKDLPDNLASSGNSLLS) the chain is Cytoplasmic. Residues 396–416 (MIMQLSMSIGVTIAGLLLGLF) traverse the membrane as a helical segment. Residues 417-430 (GSQHVSVDSGTTQT) lie on the Periplasmic side of the membrane. A helical membrane pass occupies residues 431 to 451 (VFMYTWLSMAFIIALPAFVFA). Residues 452 to 471 (RVPSDTHQNVAISRRKRSAQ) lie on the Cytoplasmic side of the membrane.

The protein belongs to the major facilitator superfamily. TCR/Tet family.

It localises to the cell inner membrane. This chain is Putative multidrug resistance protein MdtD, found in Escherichia coli O81 (strain ED1a).